The primary structure comprises 185 residues: Ribosome-recycling factor (185 aa).

Residues 140–168 (KKEQKDGNITEDEQRNLEKQVQKITDDST) form a disordered region.

This sequence belongs to the RRF family.

It localises to the cytoplasm. Responsible for the release of ribosomes from messenger RNA at the termination of protein biosynthesis. May increase the efficiency of translation by recycling ribosomes from one round of translation to another. This Lactobacillus helveticus (strain DPC 4571) protein is Ribosome-recycling factor.